Reading from the N-terminus, the 679-residue chain is DNA-directed RNA polymerase subunit beta' (679 aa).

The Zn(2+) site is built by Cys69, Cys71, Cys87, and Cys90. 3 residues coordinate Mg(2+): Asp489, Asp491, and Asp493.

The protein belongs to the RNA polymerase beta' chain family. RpoC1 subfamily. In plastids the minimal PEP RNA polymerase catalytic core is composed of four subunits: alpha, beta, beta', and beta''. When a (nuclear-encoded) sigma factor is associated with the core the holoenzyme is formed, which can initiate transcription. It depends on Mg(2+) as a cofactor. Zn(2+) is required as a cofactor.

The protein localises to the plastid. Its subcellular location is the chloroplast. It carries out the reaction RNA(n) + a ribonucleoside 5'-triphosphate = RNA(n+1) + diphosphate. DNA-dependent RNA polymerase catalyzes the transcription of DNA into RNA using the four ribonucleoside triphosphates as substrates. The protein is DNA-directed RNA polymerase subunit beta' of Oenothera argillicola (Appalachian evening primrose).